The primary structure comprises 498 residues: ATP synthase subunit beta, chloroplastic (498 aa).

Residue 172-179 (GGAGVGKT) coordinates ATP.

This sequence belongs to the ATPase alpha/beta chains family. As to quaternary structure, F-type ATPases have 2 components, CF(1) - the catalytic core - and CF(0) - the membrane proton channel. CF(1) has five subunits: alpha(3), beta(3), gamma(1), delta(1), epsilon(1). CF(0) has four main subunits: a(1), b(1), b'(1) and c(9-12).

It is found in the plastid. The protein resides in the chloroplast thylakoid membrane. The catalysed reaction is ATP + H2O + 4 H(+)(in) = ADP + phosphate + 5 H(+)(out). In terms of biological role, produces ATP from ADP in the presence of a proton gradient across the membrane. The catalytic sites are hosted primarily by the beta subunits. This Licuala grandis (Ruffled fan palm) protein is ATP synthase subunit beta, chloroplastic.